Consider the following 596-residue polypeptide: M-phase inducer phosphatase (596 aa).

Residues S99 and S178 each carry the phosphoserine modification. A disordered region spans residues 174–221 (LSSSSFDSYLRPNVSRSRSSGNAPPFLRSRSSSSYSINKKKGTSGGQA). Residues 429–533 (IFDKCIIIDC…FYENHKNRCD (105 aa)) enclose the Rhodanese domain. Catalysis depends on C480, which acts as the Phosphocysteine intermediate.

This sequence belongs to the MPI phosphatase family. In terms of assembly, interacts with rad24 during G2 in a srk1-dependent manner; the interaction is increased during osmostress. Phosphorylated by srk1 in the N-terminus; phosphorylation promotes nuclear exclusion.

It is found in the cytoplasm. The protein resides in the nucleus. The enzyme catalyses O-phospho-L-tyrosyl-[protein] + H2O = L-tyrosyl-[protein] + phosphate. Tyrosine protein phosphatase which functions as a dosage-dependent inducer of mitotic and meiotic progression. Directly dephosphorylates cdc2 and stimulates its kinase activity. Required for the G2/M transition of the cell cycle. Required for induction of meiosis II. The protein is M-phase inducer phosphatase of Schizosaccharomyces pombe (strain 972 / ATCC 24843) (Fission yeast).